The chain runs to 469 residues: MKRFPTIKIYDTLSGQVVDLVPVKEGEIKIYLCGPTVYNLLHIGNARPIIIFDAFRRFLEYIGYKVTLVQNFTDIDDKIIEQAKKENLPFEEVGKRYIIEYWRDMTALKARAFNFHPKTTNYVDEIISYIKELEEKGYAYKAENGDVYFEVEKFSRYGELSHRKVEDLKVGVRVEVSEYKKNPLDFALWKASKEGEPFWESPWGKGRPGWHIECSVMSSEILGDTFDIHAGGNDLIFPHHENERAQAIAKSGKDFAKYWMHNGMIRMAQDKMSKSLGNVWYLRDLLKKFDSDVLKIFILSKHYRIPIDVSEELLRNQEVSVNRVKESLNEAETFFNGKVPCPQKMNYFKEQEEYLISSLSNDFDTPSVVARIFELSRDLNKALNSRDEETIKNNYYIIRNIYGSVLGVFETNEQIQKNNVELNQLMEIILNVRSALREEKLYNLSDYIRDNLSKIGIEIKDTPEGTKWS.

C33 contacts Zn(2+). The 'HIGH' region motif lies at 35–45; it reads PTVYNLLHIGN. Zn(2+)-binding residues include C214, H239, and E243. The short motif at 271-275 is the 'KMSKS' region element; the sequence is KMSKS. K274 lines the ATP pocket.

This sequence belongs to the class-I aminoacyl-tRNA synthetase family. As to quaternary structure, monomer. It depends on Zn(2+) as a cofactor.

The protein localises to the cytoplasm. The catalysed reaction is tRNA(Cys) + L-cysteine + ATP = L-cysteinyl-tRNA(Cys) + AMP + diphosphate. The chain is Cysteine--tRNA ligase from Petrotoga mobilis (strain DSM 10674 / SJ95).